Consider the following 1879-residue polypeptide: MAQTLSKISNKENASVGLWPKRFKPHQPTPTWMVRCGPLDHDSRHGRDPVRASPQAKRVRTPNPYPRHLKPAASAVVRSGTNPSHLKPTSTDVVRSGPETPCCEAKDGGVVRSCKTCNLKPAHDSKAVSFFPAQTDGLTGDEPEFIAEACPSCVLYDTCPNCTSRAINDDGSTDGTIPSWDQIETTPAFLSLLSNTDEEMSADELTNLAAHLRKAFETGSHPPNVDYSKDQLQGLLEMAEAALPPARRQTLPFYQQRLEARRTWREKIFNLPLDELSKILTTSKDRFQRCAAWKVVLEKAVLAKEYGEEAYAYAQEALKNINSFDVNLVLKMAAGTFIGHLRMMTVDNPDMVSYLPKLIVKLKPLTLKMIIDNHENTKEGWLVTLTSLAELYGMVEVAIDFVPTVIGNLFDLLMKTTSKVYSMFKSVILATFTSESLDFTNPFWYAIAAILCFLITGAIPHNGKMKIIKNILSNATGIVAGVKAIQTLGAMFSTWSNERLVNDLSSRTIAITELNNPTITADIDAVINLQRLAETLREEVKSHTLNPLMQPYTPILRNLMSALDNVISCCTRRKAIATKRTAPVAVILTGPPGCGKTTAAFALAKRLSQQKPSIISLDVDHHDTYTGNEVCIIDEFDSSDKVDYANFVVNMVNTNPMVLNCDLVENKGKTFRSKYVIMKSNSETPVKPTSRRAGAFYRRVMIVDVKNTAVENWKRENPGKPVPKWCFNKDFSHLHLSMRGTEAYWREYVLDPTGRNHQSQKAPPDQHVTLEQLDQKMVVQHTTNTSEFVTQAGEVPVFGFVCQNNEIDTVYNLLAAVKARYGANFNLYKGMTRTAHENSGCGAHVHVISREDNFRGKAFTVNRSRLESVPHLEGDSFRRSLGVVMSDKDVTTMFYYIKGKVINDQVNLTELPANQHVVTVHTVYDMAWALRRHLKWTGQWQLIKAAYEIMCYPDTAACALRNWMDSTDFSEEHVVTQFIAPGGTIILESCYGARMWATGQRLIRAGGLTEAGGPQGGVRFAGLGARNVPWSEILREFMTLISHIWSQIKGATVVLTALTFYLKRFRPRVEAKGKNKNKGPRKNTGVALTDDEYDEWRQYKAEKKLDLTVEDFLQLRHRAAMGADDTDAVKFRCWYSERQRNYHDLEDVTIIGRGGVKRELIRKGPLRPRGNDFYDEPDDWYSEGVIDGVTHKNAIVSVDDVDGMHKGYALHIGHGVYMSLKHVVSGNAKILSEEPKNLTFNGELATFRLNTTLPTAAPVGTSKPIKDPWGNPVSTDWQFKNYNTTSGNIYGACGSSCSLTRQGDCGLPYVDDHGVVVGLHAGSGGDKCPSRKLIVPYVKVDMRIRDTCTKEYYKDNVPMISYKGLLVKETGEPRTIMKGTRLHVSPAHTDDYEECTHQPASLGAGDPRCPMSLTGIMVNNLQPYTEAPRTDTATLNRVTKMLISHMEGYVPKIHKTEEDMISAFYMLNHDTSCGPYIGGRKKDHVKDGVLDKNLLDLLSSKWNRAKCGLALPHEYALGLKDELRPKDKVAVGKRRLIWGCDVGVSTVCRAAFKRVSESIMANHALGFIQVGINMDGPAVEDPFKRLERPKHDRYCVDYSKWDSTQPPKVTSQSIDILRHFTDKSPIVDSACATLKSNPIGIFNGVAFKVAGGLPSGMPLTSIINSLNHCLMVGSAVVKALEDSGVQVTWNIFDSMDLFTYGDDGVYIVPPLISSVMPKVFSNLRQFGLKPTRTDKTDAEITPIPADEPVEFLKRTIVRTENGVRALLDKSSIIRQFYYIKAENTENWTVPPKKIDTSSRGQQLYNAGLYASQHGEEFYTNKIIPLVQRAIEFEGLHIEVPEFHQAVQAYNGYFNGTEDQPSQIALASGGTGFGGEVFEN.

Positions 37 to 98 (GPLDHDSRHG…TSTDVVRSGP (62 aa)) are disordered. Over residues 38–50 (PLDHDSRHGRDPV) the composition is skewed to basic and acidic residues. Positions 79 to 93 (SGTNPSHLKPTSTDV) are enriched in polar residues. Residues 564-720 (DNVISCCTRR…ENWKRENPGK (157 aa)) form the SF3 helicase domain. Position 590–597 (590–597 (GPPGCGKT)) interacts with ATP. Position 1093 is an O-(5'-phospho-RNA)-tyrosine (tyrosine 1093). The Peptidase C24 domain maps to 1188–1341 (GVTHKNAIVS…KLIVPYVKVD (154 aa)). Residues histidine 1222, glutamate 1243, and cysteine 1305 each act as for 3CLpro activity in the active site. A RdRp catalytic domain is found at 1591-1716 (HDRYCVDYSK…IVPPLISSVM (126 aa)).

As to quaternary structure, homodimer. Interacts with NTPase, protein p30 and protease-polymerase p76. Interacts with capsid protein VP1 and protease-polymerase p76. Interacts with host IEF4e; this interaction plays a role in translation of viral proteins. In terms of assembly, homooligomer. Interacts with Vpg, protein p32 and may interact with capsid protein VP1. Post-translationally, specific enzymatic cleavages in vivo yield mature proteins. Pro-Pol is first autocatalytically cleaved, then processes the whole polyprotein. VPg is uridylylated by the polymerase and is covalently attached to the 5'-end of the polyadenylated genomic and subgenomic RNAs. This uridylylated form acts as a nucleotide-peptide primer for the polymerase.

Its subcellular location is the host endoplasmic reticulum membrane. It catalyses the reaction a ribonucleoside 5'-triphosphate + H2O = a ribonucleoside 5'-diphosphate + phosphate + H(+). The catalysed reaction is RNA(n) + a ribonucleoside 5'-triphosphate = RNA(n+1) + diphosphate. It carries out the reaction Endopeptidase with a preference for cleavage when the P1 position is occupied by Glu-|-Xaa and the P1' position is occupied by Gly-|-Yaa.. In terms of biological role, together with NTPase and NS4, initiates the formation of the replication complex. Induces the proliferation of the host smooth ER membranes forming long tubular structures. These remodeled membranes probably form the viral factories that contain the replication complex. Functionally, displays NTPase activity, but no helicase activity. Induces the formation of convoluted membranes derived from the host ER. These remodeled membranes probably form the viral factories that contain the replication complex. Together with NS2 and NS4, initiates the formation of the replication complex. Its function is as follows. Probable key protein responsible for the formation of membrane alterations by the virus. Induces the formation of convoluted membranes derived from the host ER. These remodeled membranes probably form the viral factories that contain the replication complex. Together with NS2 and NTPase, initiates the formation of the replication complex. Viral genome-linked protein is covalently linked to the 5'-end of the positive-strand, negative-strand genomic RNAs and subgenomic RNA. Acts as a genome-linked replication primer. May recruit ribosome to viral RNA thereby promoting viral proteins translation. Interacts with host translation initiation complex to allow the translation of viral proteins. In terms of biological role, protease-polymerase p76 processes the polyprotein: Pro-Pol is first released by autocleavage, then all other proteins are cleaved. Cleaves host translation initiation factor eIF4G1, eIF4G2 and PABP1 thereby inducing a shutdown of host protein synthesis. This shutdown may not prevent viral mRNA from being translated since viral Vpg replaces the cap. Also functions as an RNA-directed RNA polymerase, which replicates genomic and antigenomic viral RNA by recognizing specific signals. Also transcribes a subgenomic mRNA by initiating RNA synthesis internally on antigenomic RNA. This sgRNA codes for structural proteins. Catalyzes the covalent attachment VPg with viral RNAs. This Otariidae (fur seals &amp; sea lions) protein is Genome polyprotein.